The chain runs to 115 residues: Urease subunit beta (115 aa).

The protein belongs to the urease beta subunit family. Heterotrimer of UreA (gamma), UreB (beta) and UreC (alpha) subunits. Three heterotrimers associate to form the active enzyme.

The protein resides in the cytoplasm. It carries out the reaction urea + 2 H2O + H(+) = hydrogencarbonate + 2 NH4(+). It functions in the pathway nitrogen metabolism; urea degradation; CO(2) and NH(3) from urea (urease route): step 1/1. The polypeptide is Urease subunit beta (Arthrobacter sp. (strain FB24)).